The primary structure comprises 118 residues: Putative pterin-4-alpha-carbinolamine dehydratase (118 aa).

The protein belongs to the pterin-4-alpha-carbinolamine dehydratase family.

It carries out the reaction (4aS,6R)-4a-hydroxy-L-erythro-5,6,7,8-tetrahydrobiopterin = (6R)-L-erythro-6,7-dihydrobiopterin + H2O. This chain is Putative pterin-4-alpha-carbinolamine dehydratase, found in Pseudomonas putida (strain ATCC 700007 / DSM 6899 / JCM 31910 / BCRC 17059 / LMG 24140 / F1).